A 220-amino-acid chain; its full sequence is METDDQYYRAIKKIKEAAEASNRAYLTSSKLADMLGISQQSASRIIIDLEKNGYITRTVTKRGQILNITEKGLDVLYTEFADLSRILAIKNNVVITGTVTSGMGEGRYYVARKQYIIQFQEKLGIIPYLGTLNIKVDQASLPELRKIRGFRGIHIEGFKTEDRTFGSVKAFPAKIQNIPCFVIMPERTVYTDVIEIISDKYLREEINLHDGDRVSVEVYT.

The H-T-H motif-like stretch occupies residues 1-92; it reads METDDQYYRA…LSRILAIKNN (92 aa). Positions 93-220 are riboflavin kinase; that stretch reads VVITGTVTSG…GDRVSVEVYT (128 aa). Position 102-107 (102-107) interacts with CDP; the sequence is GMGEGR. Residues threonine 131 and asparagine 133 each coordinate Mg(2+). FMN-binding residues include threonine 188 and glutamate 195. 200–203 provides a ligand contact to CDP; the sequence is KYLR.

This sequence belongs to the archaeal riboflavin kinase family. Requires Mg(2+) as cofactor.

It catalyses the reaction riboflavin + CTP = CDP + FMN + H(+). It functions in the pathway cofactor biosynthesis; FMN biosynthesis; FMN from riboflavin (CTP route): step 1/1. Its function is as follows. Catalyzes the CTP-dependent phosphorylation of riboflavin (vitamin B2) to form flavin mononucleotide (FMN). The chain is Riboflavin kinase (ribK) from Thermoplasma acidophilum (strain ATCC 25905 / DSM 1728 / JCM 9062 / NBRC 15155 / AMRC-C165).